We begin with the raw amino-acid sequence, 323 residues long: Cysteine synthase A (323 aa).

The hydrogen sulfide site is built by N8 and R35. The residue at position 42 (K42) is an N6-(pyridoxal phosphate)lysine. Pyridoxal 5'-phosphate is bound by residues N72 and 177–181 (GTGGT). L269 provides a ligand contact to hydrogen sulfide. S273 contributes to the pyridoxal 5'-phosphate binding site.

The protein belongs to the cysteine synthase/cystathionine beta-synthase family. Homodimer. The cofactor is pyridoxal 5'-phosphate.

It carries out the reaction O-acetyl-L-serine + hydrogen sulfide = L-cysteine + acetate. It functions in the pathway amino-acid biosynthesis; L-cysteine biosynthesis; L-cysteine from L-serine: step 2/2. In terms of biological role, two cysteine synthase enzymes are found. Both catalyze the same reaction. Cysteine synthase B can also use thiosulfate in place of sulfide to give cysteine thiosulfonate as a product. In Salmonella typhi, this protein is Cysteine synthase A (cysK).